A 743-amino-acid polypeptide reads, in one-letter code: MPKPRTKRGHGREEKKRKRREEAESYEAHENDSKRQRTTDENGYQDGQEAQENGIGEKEFFGMLADEEQEYFRRADELLELNQFPSDEERDVFLENVWKEAENKELKLASSQSCSRLMERLIQLSTTAQKKRLFEAFAGHFLSLVQHRFASHCCEALFLRSAGVVTKELSGFVGFVLDTKGAGGDAEKPEAAMEHLFLATLDELEGSLSYLITDRFASHTLRVLLLVLSGRPLEDSSSRTLMKSKKKEKISVSGAEAADEANKGLRAVPPSFTMAATKIIQDSTAGMDATSLRVLARHPMGNPTLQLLLELDLTLNKGEQKADAERPTLLFQLLPGAPKSLSDGSSEASEFINGMIYDQIGSRLIETLITHAPGKVFKALNQNIFLPRIEGYVRNDVSSYAAIRVLNRLSKDDLVQAVEQITPTVPQLVTKSRFNVLKTLFERCAARGANDEIKKLNKGLKEGCGKTPADLVTYLCGFKDEEKKKKDVQQLSKNEYAIQSHGAQLLTALLSIPGPVKGVQESLLAVEPTVLVRLATTSMPTVTVLTTALATPSSNPAFHKSIVSSLLPHIHELAVQQFGHNLINAIAEVPSKGKERSVPFHMKEAIMARLGEHEAELRDSWMGRSVWRNWKGDMWKTRRRDWKVWMREVDAHIESTLPQRGRAAEKQQAAQDKPSKKEEPVVEDKMEVDEVVEKPEEEKKKEKKDKKDKKEKREKKEKKDKKEKKEKKKSKPEEAEVVAEDEE.

A compositionally biased stretch (basic residues) spans 1 to 19 (MPKPRTKRGHGREEKKRKR). Positions 1–56 (MPKPRTKRGHGREEKKRKRREEAESYEAHENDSKRQRTTDENGYQDGQEAQENGIG) are disordered. Residues 20–40 (REEAESYEAHENDSKRQRTTD) are compositionally biased toward basic and acidic residues. Pumilio repeat units follow at residues 100-135 (EAEN…RLFE), 203-243 (ELEG…TLMK), 347-382 (EASE…ALNQ), and 565-608 (SLLP…AIMA). Residues 656–743 (TLPQRGRAAE…EAEVVAEDEE (88 aa)) form a disordered region. Composition is skewed to basic and acidic residues over residues 673 to 685 (KPSK…VEDK) and 691 to 700 (VVEKPEEEKK). Over residues 701–730 (KEKKDKKDKKEKREKKEKKDKKEKKEKKKS) the composition is skewed to basic residues.

The protein belongs to the NOP9 family.

The protein resides in the nucleus. Its subcellular location is the nucleolus. RNA-binding nucleolar protein required for pre-rRNA processing. Involved in production of 18S rRNA and assembly of small ribosomal subunit. This Fusarium vanettenii (strain ATCC MYA-4622 / CBS 123669 / FGSC 9596 / NRRL 45880 / 77-13-4) (Fusarium solani subsp. pisi) protein is Nucleolar protein 9 (NOP9).